A 518-amino-acid polypeptide reads, in one-letter code: Protein nucleotidyltransferase YdiU (518 aa).

Gly-109, Gly-111, Arg-112, Lys-131, Asp-143, Gly-144, Arg-194, and Arg-201 together coordinate ATP. The active-site Proton acceptor is Asp-270. Mg(2+)-binding residues include Asn-271 and Asp-280. Asp-280 is a binding site for ATP.

This sequence belongs to the SELO family. Requires Mg(2+) as cofactor. Mn(2+) serves as cofactor.

The enzyme catalyses L-seryl-[protein] + ATP = 3-O-(5'-adenylyl)-L-seryl-[protein] + diphosphate. It catalyses the reaction L-threonyl-[protein] + ATP = 3-O-(5'-adenylyl)-L-threonyl-[protein] + diphosphate. The catalysed reaction is L-tyrosyl-[protein] + ATP = O-(5'-adenylyl)-L-tyrosyl-[protein] + diphosphate. It carries out the reaction L-histidyl-[protein] + UTP = N(tele)-(5'-uridylyl)-L-histidyl-[protein] + diphosphate. The enzyme catalyses L-seryl-[protein] + UTP = O-(5'-uridylyl)-L-seryl-[protein] + diphosphate. It catalyses the reaction L-tyrosyl-[protein] + UTP = O-(5'-uridylyl)-L-tyrosyl-[protein] + diphosphate. Its function is as follows. Nucleotidyltransferase involved in the post-translational modification of proteins. It can catalyze the addition of adenosine monophosphate (AMP) or uridine monophosphate (UMP) to a protein, resulting in modifications known as AMPylation and UMPylation. This is Protein nucleotidyltransferase YdiU from Paraburkholderia xenovorans (strain LB400).